The chain runs to 155 residues: Secreted RxLR effector protein 38 (155 aa).

A signal peptide spans 1–17; sequence MHLIYIVMAATATTLHA. A RxLR-dEER motif is present at residues 49–64; that stretch reads RFLRGAYEDVHREEER.

This sequence belongs to the RxLR effector family.

Its subcellular location is the secreted. It is found in the host nucleus. The protein resides in the host cytoplasm. In terms of biological role, secreted effector that completely suppresses the host cell death induced by cell death-inducing proteins. The sequence is that of Secreted RxLR effector protein 38 from Plasmopara viticola (Downy mildew of grapevine).